Reading from the N-terminus, the 609-residue chain is Dynamin-like protein 2 (609 aa).

The interval 1 to 16 (MQINLLNDFIKAYENT) is inserts into assembly domain of DLP1, required for tetramerization. The linker stretch occupies residues 17–25 (YSVSFDDSF). The Dynamin-type G domain maps to 63 to 310 (NIAIIGQFSS…FVGIFDRLLN (248 aa)). Residues 68–75 (GQFSSGKS) form a G1 motif region. 72 to 76 (SGKSS) is a binding site for GDP. The G2 motif stretch occupies residues 93-95 (PVT). Positions 158 to 161 (DTPG) are G3 motif. The G4 motif stretch occupies residues 216–219 (NQKD).

Belongs to the TRAFAC class dynamin-like GTPase superfamily. Dynamin/Fzo/YdjA family. Forms a 2:2 heterotetramer with DLP1. DLP2 forms a central back-to-back dimer flanked on each side by a DLP1 subunit. In the crystal structures the 2 DLP1 subunits are in very different conformations.

It localises to the cytoplasm. Its subcellular location is the cytosol. It carries out the reaction GTP + H2O = GDP + phosphate + H(+). Functionally, the heterotetrameric DLP1(2)-DLP2(2) complex tethers liposomes and may mediate their fusion. Initial binding is probably mediated by DLP1, while DLP2 couples DLP1 subunits and increases the effective reach of the complex up to 45 nm. The role of the nucleotide is unknown. This subunit alone very weakly binds to liposomes; GTP, GDP, GMPPCP and GMPPNP do not change heterotetramer binding. Tetramerization is required for GTPase activity, suggesting the GTPase domains (dynamin-type G) from DLP1 and DLP2 must dimerize to reconstitute the GTPase active site. In Campylobacter jejuni subsp. jejuni serotype O:23/36 (strain 81-176), this protein is Dynamin-like protein 2.